The following is a 267-amino-acid chain: Cytokinesis defective protein 7 (267 aa).

Residues 244–267 are disordered; that stretch reads RNQADQSILPPSGDQQHHRSELHA. Over residues 258-267 the composition is skewed to basic and acidic residues; that stretch reads QQHHRSELHA.

The sequence is that of Cytokinesis defective protein 7 from Caenorhabditis elegans.